Here is a 143-residue protein sequence, read N- to C-terminus: Sarcoplasmic/endoplasmic reticulum calcium ATPase (143 aa).

It belongs to the cation transport ATPase (P-type) (TC 3.A.3) family. Type IIA subfamily.

The protein resides in the endoplasmic reticulum membrane. It localises to the sarcoplasmic reticulum membrane. The catalysed reaction is Ca(2+)(in) + ATP + H2O = Ca(2+)(out) + ADP + phosphate + H(+). This magnesium-dependent enzyme catalyzes the hydrolysis of ATP coupled with the transport of calcium. Transports calcium ions from the cytosol into the sarcoplasmic/endoplasmic reticulum lumen. Contributes to calcium sequestration involved in muscular excitation/contraction. This chain is Sarcoplasmic/endoplasmic reticulum calcium ATPase, found in Chionoecetes opilio (Atlantic snow crab).